Here is an 84-residue protein sequence, read N- to C-terminus: Putative membrane protein insertion efficiency factor (84 aa).

The segment at 64–84 (GGSGYDPPPPRHQPRKWKCEE) is disordered. A compositionally biased stretch (basic residues) spans 75–84 (HQPRKWKCEE).

The protein belongs to the UPF0161 family.

The protein localises to the cell inner membrane. Functionally, could be involved in insertion of integral membrane proteins into the membrane. The chain is Putative membrane protein insertion efficiency factor from Caulobacter vibrioides (strain ATCC 19089 / CIP 103742 / CB 15) (Caulobacter crescentus).